A 570-amino-acid chain; its full sequence is Proline--tRNA ligase (570 aa).

Belongs to the class-II aminoacyl-tRNA synthetase family. ProS type 1 subfamily. Homodimer.

The protein localises to the cytoplasm. The catalysed reaction is tRNA(Pro) + L-proline + ATP = L-prolyl-tRNA(Pro) + AMP + diphosphate. Catalyzes the attachment of proline to tRNA(Pro) in a two-step reaction: proline is first activated by ATP to form Pro-AMP and then transferred to the acceptor end of tRNA(Pro). As ProRS can inadvertently accommodate and process non-cognate amino acids such as alanine and cysteine, to avoid such errors it has two additional distinct editing activities against alanine. One activity is designated as 'pretransfer' editing and involves the tRNA(Pro)-independent hydrolysis of activated Ala-AMP. The other activity is designated 'posttransfer' editing and involves deacylation of mischarged Ala-tRNA(Pro). The misacylated Cys-tRNA(Pro) is not edited by ProRS. The chain is Proline--tRNA ligase (proS) from Aquifex aeolicus (strain VF5).